The primary structure comprises 463 residues: Endoglucanase EG-1 (463 aa).

Positions Met-1–Ala-22 are cleaved as a signal peptide. Residues Gln-23–Gly-397 are catalytic. N-linked (GlcNAc...) asparagine glycans are attached at residues Asn-78, Asn-164, Asn-204, and Asn-208. Glu-218 functions as the Nucleophile in the catalytic mechanism. Glu-223 functions as the Proton donor in the catalytic mechanism. Positions Gly-390–Gln-429 are disordered. N-linked (GlcNAc...) asparagine glycosylation occurs at Asn-394. The segment at Pro-402–Cys-427 is linker. Positions Ser-408–Gln-429 are enriched in low complexity. The region spanning Cys-427–Leu-463 is the CBM1 domain. 2 cysteine pairs are disulfide-bonded: Cys-435-Cys-452 and Cys-446-Cys-462.

Belongs to the glycosyl hydrolase 7 (cellulase C) family.

It is found in the secreted. The catalysed reaction is Endohydrolysis of (1-&gt;4)-beta-D-glucosidic linkages in cellulose, lichenin and cereal beta-D-glucans.. Its function is as follows. The biological conversion of cellulose to glucose generally requires three types of hydrolytic enzymes: (1) Endoglucanases which cut internal beta-1,4-glucosidic bonds; (2) Exocellobiohydrolases that cut the disaccharide cellobiose from the non-reducing end of the cellulose polymer chain; (3) Beta-1,4-glucosidases which hydrolyze the cellobiose and other short cello-oligosaccharides to glucose. This Trichoderma longibrachiatum protein is Endoglucanase EG-1 (egl1).